A 96-amino-acid chain; its full sequence is Integration host factor subunit beta (96 aa).

It belongs to the bacterial histone-like protein family. In terms of assembly, heterodimer of an alpha and a beta chain.

Its function is as follows. This protein is one of the two subunits of integration host factor, a specific DNA-binding protein that functions in genetic recombination as well as in transcriptional and translational control. The polypeptide is Integration host factor subunit beta (Photobacterium profundum (strain SS9)).